The sequence spans 349 residues: Phosphate carrier protein, mitochondrial (349 aa).

3 Solcar repeats span residues 47–131, 144–229, and 246–324; these read KYFA…FKVQ, YRTF…TVEL, and EQLV…VKVW. 6 helical membrane-spanning segments follow: residues 48-68, 108-128, 147-167, 207-227, 248-268, and 304-324; these read YFAL…TAVV, APTF…YEVF, FVYL…LSPL, PLWG…EKTV, LVVT…VSHP, and IIMI…VKVW.

Belongs to the mitochondrial carrier (TC 2.A.29) family.

It is found in the mitochondrion inner membrane. Functionally, transport of phosphate groups from the cytosol to the mitochondrial matrix. The protein is Phosphate carrier protein, mitochondrial of Choristoneura fumiferana (Spruce budworm moth).